Reading from the N-terminus, the 394-residue chain is Cytochrome b561 and DOMON domain-containing protein At4g12980 (394 aa).

A signal peptide spans Met1–Ser24. Residues Leu49–Gly169 enclose the DOMON domain. A Cytochrome b561 domain is found at Gly184–Leu381. The next 2 membrane-spanning stretches (helical) occupy residues Ile220–Ala240 and Ala252–Trp272. Residues His221, His257, and His290 each contribute to the heme b site. Residues Asn292–Pro312 form a helical membrane-spanning segment. His326 serves as a coordination point for heme b. The next 2 helical transmembrane spans lie at Gly328 to Leu348 and Val361 to Leu381.

Heme b serves as cofactor.

It localises to the membrane. Functionally, may act as a catecholamine-responsive trans-membrane electron transporter. The protein is Cytochrome b561 and DOMON domain-containing protein At4g12980 of Arabidopsis thaliana (Mouse-ear cress).